A 439-amino-acid polypeptide reads, in one-letter code: Xaa-Pro dipeptidase (439 aa).

Mn(2+) is bound by residues aspartate 244, aspartate 255, histidine 335, glutamate 380, and glutamate 419.

The protein belongs to the peptidase M24B family. Bacterial-type prolidase subfamily. The cofactor is Mn(2+).

The catalysed reaction is Xaa-L-Pro dipeptide + H2O = an L-alpha-amino acid + L-proline. Its function is as follows. Splits dipeptides with a prolyl residue in the C-terminal position. In Shewanella sp. (strain MR-7), this protein is Xaa-Pro dipeptidase.